A 581-amino-acid polypeptide reads, in one-letter code: MKIDMNLLKRRIKVANKEVKADTVVKNGKILNVFTGDIMRGDIAIVDGFIAGIGQYEGEQIIYAQNKVIVPGFIDGHMHIESTMLTPNELSKVLIQHGVTTVMADPHEIGNVAGIDGINFMLNASEELPIDVFIMLPSCVPATSFENSGAKLDAEDLQPFYTHPRVLGLAEFMDFSSIVNLNEKMLQKIINANLNGSIVDGHAPGLSKEELNVYISTGIYADHECANVREAKERLELGMYLMIREGTAAKELKKLIKVVTPTNSRRCMLVTDDKLPDDLIVEGSVDHNVRLAIKEGLDPVTAIQMVTINAAEFFGLRSFGAIAPGYQADLLILDELQNVSIDKVLKKGICVVDNGEIKKEEFKINDNSKELAMKLPKINMKELEKNAFKIPLSSDLCNVIEIVPNSLITYHRVEKVDIDKGNFSVSIANDQLKMAVIERHHATGNIGLGIVKGFGIKNGAIATTVAHDSHNIVVVGTSDEEMFLAVNHLKKMNGGIAIASGKEIIASLPLAIGGLISENGYLEVQQQLKILNQALSIIGVNADFNPFLTLSFLTLPVIPEIKLTDTGLFEFKTFSHIGVQA.

This sequence belongs to the metallo-dependent hydrolases superfamily. Adenine deaminase family. Mn(2+) serves as cofactor.

The catalysed reaction is adenine + H2O + H(+) = hypoxanthine + NH4(+). The protein is Adenine deaminase of Clostridium botulinum (strain Eklund 17B / Type B).